Here is a 115-residue protein sequence, read N- to C-terminus: Large ribosomal subunit protein bL19 (115 aa).

It belongs to the bacterial ribosomal protein bL19 family.

This protein is located at the 30S-50S ribosomal subunit interface and may play a role in the structure and function of the aminoacyl-tRNA binding site. This chain is Large ribosomal subunit protein bL19, found in Streptococcus suis (strain 98HAH33).